A 330-amino-acid polypeptide reads, in one-letter code: MQEQKDMFDLTIIGGGPAGLFAAFYAGMRKMKVKVIESMPQLGGQLSALYPDKYIYDVAGFPKVKAQDLVDQLTAQAQQFQPEIVLEEAVQTLEKQEDETFVLTTDANIHYTKAVLITAGAGAFAPRKLQVEKADFYEDKNIHYFIRDLSAFTGKRVVVIGGGDSAVDWALMLEPIAKEVTLVHRRDAFRAHEHSVDLLKKSSVRILTPYETAELHGDENGVTAVTFSEVKGDQTETIAVDDVIVNFGFVSTLGPIKEWGLEIRKNAIPVNTKMETNIPGVYAAGDVSTYDGKIKLIATGFGEAPTAVNNAKVYIDPTARAFPGHSTSLF.

Residues Glu-37, Gln-45, Tyr-50, Val-90, Phe-124, Asp-286, and Thr-327 each contribute to the FAD site.

The protein belongs to the ferredoxin--NADP reductase type 2 family. Homodimer. FAD serves as cofactor.

The enzyme catalyses 2 reduced [2Fe-2S]-[ferredoxin] + NADP(+) + H(+) = 2 oxidized [2Fe-2S]-[ferredoxin] + NADPH. The polypeptide is Ferredoxin--NADP reductase 2 (Shouchella clausii (strain KSM-K16) (Alkalihalobacillus clausii)).